Here is a 367-residue protein sequence, read N- to C-terminus: Avirulence protein ATR5 (367 aa).

The signal sequence occupies residues 1 to 16; the sequence is MRLISPALVVSTAIQA. A glycan (N-linked (GlcNAc...) asparagine) is linked at N20. The segment at 33-65 is disordered; the sequence is NPLASAHPPDVGYDGVPAGRVRNPDDPTTEERT. Residues 54-65 show a composition bias toward basic and acidic residues; that stretch reads RNPDDPTTEERT. The short motif at 61–64 is the dEER element; that stretch reads TEER.

Belongs to the RxLR effector family.

It localises to the secreted. The protein resides in the host cell. In terms of biological role, secreted effector that acts as an elicitor of hypersensitive response (HR) specifically on plants carrying defense protein RPP5. The sequence is that of Avirulence protein ATR5 from Hyaloperonospora arabidopsidis (strain Emoy2) (Downy mildew agent).